A 1616-amino-acid chain; its full sequence is Putative inactive phenolphthiocerol synthesis polyketide synthase type I Pks1 (1616 aa).

The acyltransferase stretch occupies residues 83–397 (TVVVFPGQGA…GQVFTTGVPV (315 aa)). The active-site For acyltransferase activity is serine 174. Residues 445–567 (HALLGAVVER…GMLGVAAAET (123 aa)) are N-terminal hotdog fold. The interval 445 to 605 (HALLGAVVER…YAYGPAFQGL (161 aa)) is dehydratase. One can recognise a PKS/mFAS DH domain in the interval 445–719 (HALLGAVVER…TRPITAEQLR (275 aa)). Histidine 477 acts as the Proton acceptor; for dehydratase activity in catalysis. The tract at residues 579 to 719 (AESVDISDGY…TRPITAEQLR (141 aa)) is C-terminal hotdog fold. Aspartate 640 functions as the Proton donor; for dehydratase activity in the catalytic mechanism. Positions 910-1215 (GTLEDLVIQP…QARHIGKVVL (306 aa)) are enoylreductase. NADP(+)-binding positions include 1040–1057 (VLIH…VQLA) and 1229–1244 (TVVI…GVLA). The segment at 1228–1409 (GTVVITGATG…SLAWGLWEQP (182 aa)) is beta-ketoacyl reductase. Residues 1514–1589 (ELLVGLVCLQ…AVAEYVAQQM (76 aa)) enclose the Carrier domain. Serine 1549 is modified (O-(pantetheine 4'-phosphoryl)serine). Residues 1588-1604 (QMSGSRPTESGDPTSQV) show a composition bias toward polar residues. The interval 1588-1616 (QMSGSRPTESGDPTSQVVEPAAAEVSVHA) is disordered.

It depends on pantetheine 4'-phosphate as a cofactor.

The protein operates within lipid metabolism; fatty acid biosynthesis. In terms of biological role, may play a role in phthiocerol biosynthesis. In Mycobacterium tuberculosis (strain ATCC 25618 / H37Rv), this protein is Putative inactive phenolphthiocerol synthesis polyketide synthase type I Pks1 (pks1).